The primary structure comprises 260 residues: Carbonic anhydrase 3 (260 aa).

Position 2 is an N-acetylalanine (Ala-2). The region spanning 3–259 (KEWGYADHNG…LKGRVVRASF (257 aa)) is the Alpha-carbonic anhydrase domain. Residues Ser-29, Ser-43, Ser-50, and Ser-55 each carry the phosphoserine modification. An involved in proton transfer region spans residues 64–67 (RTCR). Thr-73 carries the post-translational modification Phosphothreonine. Zn(2+)-binding residues include His-94, His-96, and His-119. Tyr-127 bears the Phosphotyrosine mark. Residues Thr-129 and Thr-176 each carry the phosphothreonine modification. S-glutathionyl cysteine is present on residues Cys-182 and Cys-187. Position 198 to 199 (198 to 199 (TT)) interacts with substrate. Phosphothreonine is present on Thr-216. At Ser-219 the chain carries Phosphoserine.

Belongs to the alpha-carbonic anhydrase family. The cofactor is Zn(2+). S-thiolated both by thiol-disulfide exchange with glutathione disulfide and by oxyradical-initiated S-thiolation with reduced glutathione. Post-translationally, S-glutathionylated in hepatocytes under oxidative stress.

The protein localises to the cytoplasm. It catalyses the reaction hydrogencarbonate + H(+) = CO2 + H2O. With respect to regulation, inhibited by acetazolamide. Reversible hydration of carbon dioxide. The sequence is that of Carbonic anhydrase 3 (CA3) from Equus caballus (Horse).